Consider the following 180-residue polypeptide: ATP synthase subunit delta (180 aa).

This sequence belongs to the ATPase delta chain family. As to quaternary structure, F-type ATPases have 2 components, F(1) - the catalytic core - and F(0) - the membrane proton channel. F(1) has five subunits: alpha(3), beta(3), gamma(1), delta(1), epsilon(1). F(0) has three main subunits: a(1), b(2) and c(10-14). The alpha and beta chains form an alternating ring which encloses part of the gamma chain. F(1) is attached to F(0) by a central stalk formed by the gamma and epsilon chains, while a peripheral stalk is formed by the delta and b chains.

The protein resides in the cell inner membrane. Its function is as follows. F(1)F(0) ATP synthase produces ATP from ADP in the presence of a proton or sodium gradient. F-type ATPases consist of two structural domains, F(1) containing the extramembraneous catalytic core and F(0) containing the membrane proton channel, linked together by a central stalk and a peripheral stalk. During catalysis, ATP synthesis in the catalytic domain of F(1) is coupled via a rotary mechanism of the central stalk subunits to proton translocation. Functionally, this protein is part of the stalk that links CF(0) to CF(1). It either transmits conformational changes from CF(0) to CF(1) or is implicated in proton conduction. In Trichlorobacter lovleyi (strain ATCC BAA-1151 / DSM 17278 / SZ) (Geobacter lovleyi), this protein is ATP synthase subunit delta.